A 403-amino-acid polypeptide reads, in one-letter code: Aspartic protease pepA (403 aa).

The N-terminal stretch at 1 to 20 (MVLITQLGAALAVFSALTVA) is a signal peptide. A propeptide spans 21–67 (APTKGKARFSAPQVGIPKKAKHHPAAAYARALHKFGMKIPKAVSDAA) (activation peptide). One can recognise a Peptidase A1 domain in the interval 82–400 (YVTQVTVGGS…DTQGPRIGFA (319 aa)). Asp-98 is a catalytic residue. N-linked (GlcNAc...) asparagine glycosylation is present at Asn-270. Residue Asp-293 is part of the active site. The cysteines at positions 329 and 362 are disulfide-linked.

This sequence belongs to the peptidase A1 family. In terms of assembly, monomer.

It is found in the secreted. Its function is as follows. Secreted aspartic endopeptidase that allows assimilation of proteinaceous substrates. The scissile peptide bond is attacked by a nucleophilic water molecule activated by two aspartic residues in the active site. Shows a broad primary substrate specificity. Favors hydrophobic residues at the P1 and P1' positions. The polypeptide is Aspartic protease pepA (Arthroderma gypseum (strain ATCC MYA-4604 / CBS 118893) (Microsporum gypseum)).